The following is a 66-amino-acid chain: Beta-mammal toxin Co1 (66 aa).

Positions 1–66 (KEGYLVNHST…VWPLPKKTCN (66 aa)) constitute an LCN-type CS-alpha/beta domain. Intrachain disulfides connect cysteine 12–cysteine 65, cysteine 16–cysteine 41, cysteine 25–cysteine 46, and cysteine 29–cysteine 48.

Expressed by the venom gland.

Its subcellular location is the secreted. Beta toxins bind voltage-independently at site-4 of sodium channels (Nav) and shift the voltage of activation toward more negative potentials thereby affecting sodium channel activation and promoting spontaneous and repetitive firing. This toxin acts on human Nav1.6/SCN8A voltage-gated sodium channels. In vivo, is lethal to mice 40 minutes after intraperitoneal injection at a dose of 5ug. No activity is observed when injected into crickets or woodlice. In Centruroides ornatus (Scorpion), this protein is Beta-mammal toxin Co1.